A 301-amino-acid chain; its full sequence is Putative F-box/LRR-repeat protein 19 (301 aa).

The region spanning 18-66 is the F-box domain; the sequence is PDWSELTRECLLDIFSRLSQEQRWIGPMLVSKNWMNACYDPTLNTIFDL. LRR repeat units follow at residues 108–133, 134–159, 160–185, 231–256, and 257–282; these read IRHC…WIKN, CPNV…DISY, SYGI…KRNL, YSTL…DLRG, and CISL…IKPD.

The chain is Putative F-box/LRR-repeat protein 19 (FBL19) from Arabidopsis thaliana (Mouse-ear cress).